Here is a 365-residue protein sequence, read N- to C-terminus: DNA replication and repair protein RecF (365 aa).

Residue 30–37 (GANGQGKT) coordinates ATP.

Belongs to the RecF family.

It localises to the cytoplasm. The RecF protein is involved in DNA metabolism; it is required for DNA replication and normal SOS inducibility. RecF binds preferentially to single-stranded, linear DNA. It also seems to bind ATP. In Geobacter sulfurreducens (strain ATCC 51573 / DSM 12127 / PCA), this protein is DNA replication and repair protein RecF.